A 366-amino-acid chain; its full sequence is Peptide chain release factor 2 (366 aa).

At Gln253 the chain carries N5-methylglutamine.

The protein belongs to the prokaryotic/mitochondrial release factor family. Post-translationally, methylated by PrmC. Methylation increases the termination efficiency of RF2.

Its subcellular location is the cytoplasm. In terms of biological role, peptide chain release factor 2 directs the termination of translation in response to the peptide chain termination codons UGA and UAA. The sequence is that of Peptide chain release factor 2 from Yersinia pestis.